A 358-amino-acid chain; its full sequence is Putative inhibitor of apoptosis (358 aa).

BIR repeat units lie at residues 4–70 and 90–157; these read EKDR…CPFL and YAAR…CEYL. Residues C127, C130, H147, and C154 each contribute to the Zn(2+) site. The 91-residue stretch at 193-283 folds into the CARD domain; sequence EPPNDLSLIR…MLYKHLFVQQ (91 aa). Residues 311-346 form an RING-type zinc finger; it reads CKVCMDKEVSIVFIPCGHLVVCKDCAPSLRKCPICR.

This sequence belongs to the IAP family.

This is Putative inhibitor of apoptosis (PIAP) from Sus scrofa (Pig).